We begin with the raw amino-acid sequence, 855 residues long: Envelope glycoprotein gp160 (855 aa).

An N-terminal signal peptide occupies residues 1–31; sequence MRAREIERNCPNLWKWGIMLLGILMICSAAD. Over 32–683 the chain is Extracellular; it reads NLWVTVYYGV…ITQWLWYIKI (652 aa). A disulfide bridge connects residues C53 and C73. N-linked (GlcNAc...) asparagine; by host glycosylation is found at N87, N129, N140, N145, N154, N158, N186, N189, N199, N236, N243, N264, N278, N291, and N297. 5 disulfide bridges follow: C118-C207, C125-C198, C130-C155, C220-C249, and C230-C241. A V1 region spans residues 130 to 154; the sequence is CTDESDEWMGNVTGKNVTEDIRMKN. Residues 155–198 are V2; it reads CSFNITTVVRDKTKQVHALFYRLDIVPIDNDNSTNSTNYRLINC. Residues 298–331 form a V3 region; it reads CTRPYKNTRQSTPIGLGQALYTTRGRTKIIGQAH. Residues C298 and C332 are joined by a disulfide bond. Residues N333, N340, and N355 are each glycosylated (N-linked (GlcNAc...) asparagine; by host). The segment at 364 to 374 is CD4-binding loop; the sequence is SSGGDAEITTH. Disulfide bonds link C378–C444 and C385–C417. The segment at 385-417 is V4; the sequence is CNTSGLFNSTWNINNSEGANSTESDNKLITLQC. N386, N392, N398, N404, N443, N447, N460, N461, and N464 each carry an N-linked (GlcNAc...) asparagine; by host glycan. V5 regions lie at residues 459-470 and 462-470; these read TNNSSNETFRPG and SSNETFRPG. The segment at 511–531 is fusion peptide; the sequence is AIGLGAMFLGFLGAAGSTMGA. The immunosuppression stretch occupies residues 573–591; the sequence is KQLQARILAVERYLKDQQL. A disulfide bond links C597 and C603. N610, N615, N624, N636, and N673 each carry an N-linked (GlcNAc...) asparagine; by host glycan. The stretch at 632 to 666 forms a coiled coil; that stretch reads REIDNYTGLIYRLIEESQTQQEKNEQELLELDKWA. The MPER; binding to GalCer stretch occupies residues 661 to 682; sequence ELDKWASLWNWFNITQWLWYIK. The chain crosses the membrane as a helical span at residues 684–704; sequence FIMIVGGLIGLRIVFAVLSLV. Residues 705–855 lie on the Cytoplasmic side of the membrane; that stretch reads NRVRQGYSPL…IRQGLERLLL (151 aa). A YXXL motif; contains endocytosis signal motif is present at residues 711–714; the sequence is YSPL. The S-palmitoyl cysteine; by host moiety is linked to residue C763. Residues 854-855 carry the Di-leucine internalization motif motif; sequence LL.

It belongs to the HIV-1 env protein family. In terms of assembly, the mature envelope protein (Env) consists of a homotrimer of non-covalently associated gp120-gp41 heterodimers. The resulting complex protrudes from the virus surface as a spike. There seems to be as few as 10 spikes on the average virion. Interacts with host CD4, CCR5 and CXCR4. Gp120 also interacts with the C-type lectins CD209/DC-SIGN and CLEC4M/DC-SIGNR (collectively referred to as DC-SIGN(R)). Gp120 and gp41 interact with GalCer. Gp120 interacts with host ITGA4/ITGB7 complex; on CD4+ T-cells, this interaction results in rapid activation of integrin ITGAL/LFA-1, which facilitates efficient cell-to-cell spreading of HIV-1. Gp120 interacts with cell-associated heparan sulfate; this interaction increases virus infectivity on permissive cells and may be involved in infection of CD4- cells. As to quaternary structure, the mature envelope protein (Env) consists of a homotrimer of non-covalently associated gp120-gp41 heterodimers. The resulting complex protrudes from the virus surface as a spike. There seems to be as few as 10 spikes on the average virion. Highly glycosylated by host. The high number of glycan on the protein is reffered to as 'glycan shield' because it contributes to hide protein sequence from adaptive immune system. Post-translationally, palmitoylation of the transmembrane protein and of Env polyprotein (prior to its proteolytic cleavage) is essential for their association with host cell membrane lipid rafts. Palmitoylation is therefore required for envelope trafficking to classical lipid rafts, but not for viral replication. In terms of processing, specific enzymatic cleavages in vivo yield mature proteins. Envelope glycoproteins are synthesized as an inactive precursor that is heavily N-glycosylated and processed likely by host cell furin in the Golgi to yield the mature SU and TM proteins. The cleavage site between SU and TM requires the minimal sequence [KR]-X-[KR]-R. About 2 of the 9 disulfide bonds of gp41 are reduced by P4HB/PDI, following binding to CD4 receptor.

It is found in the virion membrane. It localises to the host cell membrane. The protein localises to the host endosome membrane. Functionally, oligomerizes in the host endoplasmic reticulum into predominantly trimers. In a second time, gp160 transits in the host Golgi, where glycosylation is completed. The precursor is then proteolytically cleaved in the trans-Golgi and thereby activated by cellular furin or furin-like proteases to produce gp120 and gp41. Its function is as follows. Attaches the virus to the host lymphoid cell by binding to the primary receptor CD4. This interaction induces a structural rearrangement creating a high affinity binding site for a chemokine coreceptor like CXCR4 and/or CCR5. Acts as a ligand for CD209/DC-SIGN and CLEC4M/DC-SIGNR, which are respectively found on dendritic cells (DCs), and on endothelial cells of liver sinusoids and lymph node sinuses. These interactions allow capture of viral particles at mucosal surfaces by these cells and subsequent transmission to permissive cells. HIV subverts the migration properties of dendritic cells to gain access to CD4+ T-cells in lymph nodes. Virus transmission to permissive T-cells occurs either in trans (without DCs infection, through viral capture and transmission), or in cis (following DCs productive infection, through the usual CD4-gp120 interaction), thereby inducing a robust infection. In trans infection, bound virions remain infectious over days and it is proposed that they are not degraded, but protected in non-lysosomal acidic organelles within the DCs close to the cell membrane thus contributing to the viral infectious potential during DCs' migration from the periphery to the lymphoid tissues. On arrival at lymphoid tissues, intact virions recycle back to DCs' cell surface allowing virus transmission to CD4+ T-cells. Acts as a class I viral fusion protein. Under the current model, the protein has at least 3 conformational states: pre-fusion native state, pre-hairpin intermediate state, and post-fusion hairpin state. During fusion of viral and target intracellular membranes, the coiled coil regions (heptad repeats) assume a trimer-of-hairpins structure, positioning the fusion peptide in close proximity to the C-terminal region of the ectodomain. The formation of this structure appears to drive apposition and subsequent fusion of viral and target cell membranes. Complete fusion occurs in host cell endosomes and is dynamin-dependent, however some lipid transfer might occur at the plasma membrane. The virus undergoes clathrin-dependent internalization long before endosomal fusion, thus minimizing the surface exposure of conserved viral epitopes during fusion and reducing the efficacy of inhibitors targeting these epitopes. Membranes fusion leads to delivery of the nucleocapsid into the cytoplasm. In Homo sapiens (Human), this protein is Envelope glycoprotein gp160.